Consider the following 347-residue polypeptide: Autoinducer 2 import system permease protein LsrC (347 aa).

The next 9 helical transmembrane spans lie at 14–34 (LLAIVCLFVFPGALDSQYLSV), 39–59 (MVFSSAQILMLLAIGATMVML), 72–92 (GMCAVLLGVMLNAGYSLPVAC), 93–113 (LATLILGIVAGFFNGVLVAWL), 115–135 (IPAIVATLGTLGLYRGIMLLW), 155–175 (VFLGISAIGWFTLVLALLMAW), 213–233 (LNGGMAALAGIVFASQIGFIP), 249–269 (VLGGISLLGGSGTVIGAILGA), and 284–304 (IPAWWNDFIAGLVLLGVLVFD).

The protein belongs to the binding-protein-dependent transport system permease family. AraH/RbsC subfamily. As to quaternary structure, the complex is composed of two ATP-binding proteins (LsrA), two transmembrane proteins (LsrC and LsrD) and a solute-binding protein (LsrB).

It localises to the cell inner membrane. In terms of biological role, part of the ABC transporter complex LsrABCD involved in autoinducer 2 (AI-2) import. Probably responsible for the translocation of the substrate across the membrane. In Salmonella paratyphi A (strain ATCC 9150 / SARB42), this protein is Autoinducer 2 import system permease protein LsrC (lsrC).